A 231-amino-acid polypeptide reads, in one-letter code: Cytidylate kinase (231 aa).

16 to 24 provides a ligand contact to ATP; the sequence is GPAASGKST. The tract at residues 176–205 is disordered; that stretch reads PDLDSLEQEITKRDRDDAEREHAPLKKHPE. Residues 184–205 show a composition bias toward basic and acidic residues; sequence EITKRDRDDAEREHAPLKKHPE.

This sequence belongs to the cytidylate kinase family. Type 1 subfamily.

It is found in the cytoplasm. The catalysed reaction is CMP + ATP = CDP + ADP. The enzyme catalyses dCMP + ATP = dCDP + ADP. The chain is Cytidylate kinase from Pelodictyon phaeoclathratiforme (strain DSM 5477 / BU-1).